The primary structure comprises 156 residues: NADH-ubiquinone oxidoreductase 20 kDa subunit (156 aa).

4 residues coordinate [4Fe-4S] cluster: cysteine 33, cysteine 34, cysteine 98, and cysteine 128.

It belongs to the complex I 20 kDa subunit family. It depends on [4Fe-4S] cluster as a cofactor.

The protein localises to the mitochondrion. It carries out the reaction a ubiquinone + NADH + 5 H(+)(in) = a ubiquinol + NAD(+) + 4 H(+)(out). The protein is NADH-ubiquinone oxidoreductase 20 kDa subunit (NAD10) of Paramecium tetraurelia.